We begin with the raw amino-acid sequence, 255 residues long: uncharacterized protein (255 aa).

The protein belongs to the methyltransferase superfamily.

This is an uncharacterized protein from Mycobacterium ulcerans (strain Agy99).